A 139-amino-acid polypeptide reads, in one-letter code: Putative pre-16S rRNA nuclease (139 aa).

Belongs to the YqgF nuclease family.

The protein resides in the cytoplasm. Its function is as follows. Could be a nuclease involved in processing of the 5'-end of pre-16S rRNA. This chain is Putative pre-16S rRNA nuclease, found in Streptococcus thermophilus (strain CNRZ 1066).